The sequence spans 228 residues: Cytochrome c oxidase subunit 2 (228 aa).

Topologically, residues 1 to 14 (MAYPFQLGFQDATS) are mitochondrial intermembrane. The helical transmembrane segment at 15–45 (PIMEELLHFHDHTLMIVFLISSLVLYIISLM) threads the bilayer. Topologically, residues 46-59 (LTTKLTHTSTMDAQ) are mitochondrial matrix. Residues 60–87 (EVETIWTILPAIILILIALPSLRILYMM) form a helical membrane-spanning segment. At 88-228 (DEINNPALTV…FEKWSTSMLT (141 aa)) the chain is on the mitochondrial intermembrane side. Cu cation-binding residues include H161, C196, E198, C200, H204, and M207. E198 provides a ligand contact to Mg(2+). Position 218 is a phosphotyrosine (Y218).

It belongs to the cytochrome c oxidase subunit 2 family. As to quaternary structure, component of the cytochrome c oxidase (complex IV, CIV), a multisubunit enzyme composed of 14 subunits. The complex is composed of a catalytic core of 3 subunits MT-CO1, MT-CO2 and MT-CO3, encoded in the mitochondrial DNA, and 11 supernumerary subunits COX4I, COX5A, COX5B, COX6A, COX6B, COX6C, COX7A, COX7B, COX7C, COX8 and NDUFA4, which are encoded in the nuclear genome. The complex exists as a monomer or a dimer and forms supercomplexes (SCs) in the inner mitochondrial membrane with NADH-ubiquinone oxidoreductase (complex I, CI) and ubiquinol-cytochrome c oxidoreductase (cytochrome b-c1 complex, complex III, CIII), resulting in different assemblies (supercomplex SCI(1)III(2)IV(1) and megacomplex MCI(2)III(2)IV(2)). Found in a complex with TMEM177, COA6, COX18, COX20, SCO1 and SCO2. Interacts with TMEM177 in a COX20-dependent manner. Interacts with COX20. Interacts with COX16. Cu cation serves as cofactor.

It localises to the mitochondrion inner membrane. The enzyme catalyses 4 Fe(II)-[cytochrome c] + O2 + 8 H(+)(in) = 4 Fe(III)-[cytochrome c] + 2 H2O + 4 H(+)(out). Component of the cytochrome c oxidase, the last enzyme in the mitochondrial electron transport chain which drives oxidative phosphorylation. The respiratory chain contains 3 multisubunit complexes succinate dehydrogenase (complex II, CII), ubiquinol-cytochrome c oxidoreductase (cytochrome b-c1 complex, complex III, CIII) and cytochrome c oxidase (complex IV, CIV), that cooperate to transfer electrons derived from NADH and succinate to molecular oxygen, creating an electrochemical gradient over the inner membrane that drives transmembrane transport and the ATP synthase. Cytochrome c oxidase is the component of the respiratory chain that catalyzes the reduction of oxygen to water. Electrons originating from reduced cytochrome c in the intermembrane space (IMS) are transferred via the dinuclear copper A center (CU(A)) of subunit 2 and heme A of subunit 1 to the active site in subunit 1, a binuclear center (BNC) formed by heme A3 and copper B (CU(B)). The BNC reduces molecular oxygen to 2 water molecules using 4 electrons from cytochrome c in the IMS and 4 protons from the mitochondrial matrix. This chain is Cytochrome c oxidase subunit 2 (MT-CO2), found in Sus scrofa (Pig).